The primary structure comprises 217 residues: Small ribosomal subunit protein uS3 (217 aa).

One can recognise a KH type-2 domain in the interval 38–106 (IRKFINKELA…QVHINIIEIK (69 aa)).

The protein belongs to the universal ribosomal protein uS3 family. As to quaternary structure, part of the 30S ribosomal subunit. Forms a tight complex with proteins S10 and S14.

Binds the lower part of the 30S subunit head. Binds mRNA in the 70S ribosome, positioning it for translation. The protein is Small ribosomal subunit protein uS3 of Streptococcus equi subsp. equi (strain 4047).